The following is a 188-amino-acid chain: Phosphatidylinositol N-acetylglucosaminyltransferase subunit H (188 aa).

Belongs to the PIGH family. Component of the glycosylphosphatidylinositol-N-acetylglucosaminyltransferase (GPI-GnT) complex composed at least by PIGA, PIGC, PIGH, PIGP, PIGQ, PIGY and DPM2. Interacts with PIGQ.

It localises to the cytoplasm. It functions in the pathway glycolipid biosynthesis; glycosylphosphatidylinositol-anchor biosynthesis. Part of the glycosylphosphatidylinositol-N-acetylglucosaminyltransferase (GPI-GnT) complex that catalyzes the transfer of N-acetylglucosamine from UDP-N-acetylglucosamine to phosphatidylinositol and participates in the first step of GPI biosynthesis. The chain is Phosphatidylinositol N-acetylglucosaminyltransferase subunit H from Bos taurus (Bovine).